A 256-amino-acid polypeptide reads, in one-letter code: NH(3)-dependent NAD(+) synthetase (256 aa).

29-36 (GISGGIDS) provides a ligand contact to ATP. A Mg(2+)-binding site is contributed by Asp-35. Arg-115 is a binding site for deamido-NAD(+). Thr-135 provides a ligand contact to ATP. Position 140 (Glu-140) interacts with Mg(2+). Deamido-NAD(+)-binding residues include Lys-148 and Asp-155. 2 residues coordinate ATP: Lys-164 and Ser-186. Position 245–246 (245–246 (HK)) interacts with deamido-NAD(+).

It belongs to the NAD synthetase family. As to quaternary structure, homodimer.

It catalyses the reaction deamido-NAD(+) + NH4(+) + ATP = AMP + diphosphate + NAD(+) + H(+). The protein operates within cofactor biosynthesis; NAD(+) biosynthesis; NAD(+) from deamido-NAD(+) (ammonia route): step 1/1. In terms of biological role, catalyzes the ATP-dependent amidation of deamido-NAD to form NAD. Uses ammonia as a nitrogen source. This chain is NH(3)-dependent NAD(+) synthetase, found in Methanosarcina acetivorans (strain ATCC 35395 / DSM 2834 / JCM 12185 / C2A).